The following is a 320-amino-acid chain: Tyrosine recombinase Synpcc7942_B2651 (320 aa).

Positions 16-106 (VQDWDVLQML…ALKSLVRFSR (91 aa)) constitute a Core-binding (CB) domain. Residues 127-313 (RDTTGTTPER…RQDFQGECTE (187 aa)) form the Tyr recombinase domain. Catalysis depends on residues arginine 167, lysine 193, histidine 264, arginine 267, and histidine 291. Tyrosine 300 acts as the O-(3'-phospho-DNA)-tyrosine intermediate in catalysis.

The protein belongs to the 'phage' integrase family.

It localises to the cytoplasm. Functionally, site-specific tyrosine recombinase, which acts by catalyzing the cutting and rejoining of the recombining DNA molecules. This chain is Tyrosine recombinase Synpcc7942_B2651, found in Synechococcus elongatus (strain ATCC 33912 / PCC 7942 / FACHB-805) (Anacystis nidulans R2).